The sequence spans 1387 residues: Magnesium-chelatase subunit ChlH, chloroplastic (1387 aa).

A chloroplast-targeting transit peptide spans 1–50; sequence MSSLVSTPFTTATGVQKKLGAPVPLHSFLLSRRQPAAGAGRGRAAAAAIR.

This sequence belongs to the Mg-chelatase subunit H family. In terms of assembly, the magnesium chelatase complex is a heterotrimer consisting of subunits CHLI, CHLD and CHLH.

Its subcellular location is the plastid. The protein resides in the chloroplast stroma. The protein localises to the chloroplast membrane. It catalyses the reaction protoporphyrin IX + Mg(2+) + ATP + H2O = Mg-protoporphyrin IX + ADP + phosphate + 3 H(+). It participates in porphyrin-containing compound metabolism; chlorophyll biosynthesis. Involved in chlorophyll biosynthesis. Catalyzes the insertion of magnesium ion into protoporphyrin IX to yield Mg-protoporphyrin IX. The reaction takes place in two steps, with an ATP-dependent activation followed by an ATP-dependent chelation step. May be involved in the plastid-to-nucleus retrograde signaling. This chain is Magnesium-chelatase subunit ChlH, chloroplastic (CHLH), found in Oryza sativa subsp. japonica (Rice).